The primary structure comprises 310 residues: MGAGIIGVGRYVPEKVLTNFDLEKMMDTSDEWIRTRTGIEERRIAADDIDTSDMAYFAAKRALQDAGMEAKDIDLILVATVTPDRPFPSVACMLQERLGAVNAAALDISAACAGFMYGMVTAAQFIDTGAYKYILVVGADKLSKITDWTDRNTAVLFGDGAGAVVMGPVSPGRGILSFELGADGTGGKHLYKDEYIVMNGREVFKFAVRQMGESSVRVLEKAGLTKDDVDFLIPHQANIRIVEAARQRLELPEEKISTTIRRYGNTSAASIPISLVEELEAGKIHDDDLIIMVGFGGGLTWGAIALRWGR.

Catalysis depends on residues cysteine 112 and histidine 235. The segment at 236-240 (QANIR) is ACP-binding. The active site involves asparagine 265.

Belongs to the thiolase-like superfamily. FabH family. Homodimer.

It is found in the cytoplasm. It carries out the reaction malonyl-[ACP] + acetyl-CoA + H(+) = 3-oxobutanoyl-[ACP] + CO2 + CoA. The protein operates within lipid metabolism; fatty acid biosynthesis. Catalyzes the condensation reaction of fatty acid synthesis by the addition to an acyl acceptor of two carbons from malonyl-ACP. Catalyzes the first condensation reaction which initiates fatty acid synthesis and may therefore play a role in governing the total rate of fatty acid production. Possesses both acetoacetyl-ACP synthase and acetyl transacylase activities. Its substrate specificity determines the biosynthesis of branched-chain and/or straight-chain of fatty acids. In Geobacillus kaustophilus (strain HTA426), this protein is Beta-ketoacyl-[acyl-carrier-protein] synthase III.